The primary structure comprises 595 residues: Elongation factor 4 (595 aa).

Positions 2–184 constitute a tr-type G domain; that stretch reads KNIRNFSIIA…QIVERIPTPK (183 aa). GTP is bound by residues 14 to 19 and 131 to 134; these read DHGKST and NKID.

It belongs to the TRAFAC class translation factor GTPase superfamily. Classic translation factor GTPase family. LepA subfamily.

It localises to the cell inner membrane. The catalysed reaction is GTP + H2O = GDP + phosphate + H(+). Required for accurate and efficient protein synthesis under certain stress conditions. May act as a fidelity factor of the translation reaction, by catalyzing a one-codon backward translocation of tRNAs on improperly translocated ribosomes. Back-translocation proceeds from a post-translocation (POST) complex to a pre-translocation (PRE) complex, thus giving elongation factor G a second chance to translocate the tRNAs correctly. Binds to ribosomes in a GTP-dependent manner. The sequence is that of Elongation factor 4 from Vesicomyosocius okutanii subsp. Calyptogena okutanii (strain HA).